Consider the following 559-residue polypeptide: Potassium-transporting ATPase potassium-binding subunit (559 aa).

Helical transmembrane passes span 5–25 (GFLL…PLGS), 27–47 (LARL…RILW), 63–83 (LLAL…LLFW), 132–152 (GLTV…FALI), 170–190 (LVRI…LFFI), 253–273 (LAQM…FGEA), 283–303 (LLWA…WAEV), 327–347 (FGVL…CGAV), 356–376 (ALGG…FGGV), 379–399 (GLYG…LMIG), 416–436 (MTAL…ALAM), 484–504 (LLAF…MAIA), and 524–544 (GALF…LTFI).

This sequence belongs to the KdpA family. As to quaternary structure, the system is composed of three essential subunits: KdpA, KdpB and KdpC.

Its subcellular location is the cell inner membrane. Its function is as follows. Part of the high-affinity ATP-driven potassium transport (or Kdp) system, which catalyzes the hydrolysis of ATP coupled with the electrogenic transport of potassium into the cytoplasm. This subunit binds the periplasmic potassium ions and delivers the ions to the membrane domain of KdpB through an intramembrane tunnel. The polypeptide is Potassium-transporting ATPase potassium-binding subunit (Salmonella enteritidis PT4 (strain P125109)).